Consider the following 525-residue polypeptide: Zwittermicin A synthase ZmaJ (525 aa).

The protein belongs to the ATP-dependent AMP-binding enzyme family.

The enzyme catalyses holo-[peptidyl-carrier protein] + L-serine + ATP = L-seryl-[peptidyl-carrier protein] + AMP + diphosphate. It functions in the pathway antibiotic biosynthesis. In terms of biological role, involved in the biosynthesis of the linear aminopolyol antibiotic zwittermicin A (ZmA). Specifically adenylates L-serine and loads it onto the holo form of ZmaH via a thioester linkage to the phosphopanthetheine moiety. In Bacillus cereus, this protein is Zwittermicin A synthase ZmaJ.